The primary structure comprises 311 residues: Homoserine kinase (311 aa).

ATP is bound at residue 96-106 (PLARGLGSSAA).

It belongs to the GHMP kinase family. Homoserine kinase subfamily.

Its subcellular location is the cytoplasm. It carries out the reaction L-homoserine + ATP = O-phospho-L-homoserine + ADP + H(+). Its pathway is amino-acid biosynthesis; L-threonine biosynthesis; L-threonine from L-aspartate: step 4/5. Catalyzes the ATP-dependent phosphorylation of L-homoserine to L-homoserine phosphate. The chain is Homoserine kinase from Natranaerobius thermophilus (strain ATCC BAA-1301 / DSM 18059 / JW/NM-WN-LF).